Consider the following 385-residue polypeptide: Acetate kinase (385 aa).

Residue N9 participates in Mg(2+) binding. K16 provides a ligand contact to ATP. R75 is a binding site for substrate. Catalysis depends on D132, which acts as the Proton donor/acceptor. ATP contacts are provided by residues 192 to 196, 266 to 268, and 314 to 318; these read HLGNG, DFR, and GIGEN. Residue E368 coordinates Mg(2+).

Belongs to the acetokinase family. In terms of assembly, homodimer. The cofactor is Mg(2+). Requires Mn(2+) as cofactor.

Its subcellular location is the cytoplasm. The catalysed reaction is acetate + ATP = acetyl phosphate + ADP. Its pathway is metabolic intermediate biosynthesis; acetyl-CoA biosynthesis; acetyl-CoA from acetate: step 1/2. In terms of biological role, catalyzes the formation of acetyl phosphate from acetate and ATP. Can also catalyze the reverse reaction. In Mycobacterium bovis (strain ATCC BAA-935 / AF2122/97), this protein is Acetate kinase.